Consider the following 136-residue polypeptide: MKKSGILNKELNTLLASLGHTDTIVIADCGLPIPNEQARIDLSLVKGFPPFLSVLDAVVDELEIEAIVLAEEIKDQNPDLYESIRARMGGVPVQFVPHEQFKAMTKQAKAVIRTGEATPYANIILRSGVSFSSKDF.

The active-site Proton donor is the His20. Substrate-binding positions include Asp28, His98, and 120-122 (YAN).

It belongs to the RbsD / FucU family. RbsD subfamily. Homodecamer.

It is found in the cytoplasm. It carries out the reaction beta-D-ribopyranose = beta-D-ribofuranose. The protein operates within carbohydrate metabolism; D-ribose degradation; D-ribose 5-phosphate from beta-D-ribopyranose: step 1/2. In terms of biological role, catalyzes the interconversion of beta-pyran and beta-furan forms of D-ribose. This chain is D-ribose pyranase, found in Geobacillus kaustophilus (strain HTA426).